We begin with the raw amino-acid sequence, 233 residues long: Sugar fermentation stimulation protein homolog (233 aa).

Belongs to the SfsA family.

The chain is Sugar fermentation stimulation protein homolog from Acetivibrio thermocellus (strain ATCC 27405 / DSM 1237 / JCM 9322 / NBRC 103400 / NCIMB 10682 / NRRL B-4536 / VPI 7372) (Clostridium thermocellum).